We begin with the raw amino-acid sequence, 247 residues long: 23S rRNA (guanosine-2'-O-)-methyltransferase RlmB (247 aa).

S-adenosyl-L-methionine is bound by residues glycine 197, isoleucine 217, and leucine 226.

Belongs to the class IV-like SAM-binding methyltransferase superfamily. RNA methyltransferase TrmH family. RlmB subfamily.

It is found in the cytoplasm. It catalyses the reaction guanosine(2251) in 23S rRNA + S-adenosyl-L-methionine = 2'-O-methylguanosine(2251) in 23S rRNA + S-adenosyl-L-homocysteine + H(+). Specifically methylates the ribose of guanosine 2251 in 23S rRNA. This chain is 23S rRNA (guanosine-2'-O-)-methyltransferase RlmB, found in Vibrio cholerae serotype O1 (strain ATCC 39315 / El Tor Inaba N16961).